The primary structure comprises 878 residues: Splicing factor 3B subunit 2 (878 aa).

Residues 1 to 10 show a composition bias toward basic and acidic residues; it reads MAAEHPEPPK. Disordered stretches follow at residues 1–25 and 67–136; these read MAAE…GHYG and RPVL…LRVG. K10 participates in a covalent cross-link: Glycyl lysine isopeptide (Lys-Gly) (interchain with G-Cter in SUMO2). The 35-residue stretch at 24 to 58 folds into the SAP domain; it reads YGAWAAQELQARLAEIGAPIQGSREELVERLQTYT. 2 stretches are compositionally biased toward pro residues: residues 91–114 and 122–133; these read PMPP…PPPG and AHPPNLGPPPPL. The stretch at 140–177 forms a coiled coil; the sequence is ALSEEERLKLAQQQAALLMQQEERAKQAAVLMEQERQQ. Disordered stretches follow at residues 183 to 356 and 383 to 436; these read GTAV…EYVT and KKEK…SKKK. Residues 201-221 are compositionally biased toward low complexity; sequence PLGPRVAAPVGPVVPTPTVLP. Residues R205, R228, and R230 each carry the omega-N-methylarginine modification. Positions 224–237 are enriched in pro residues; sequence APVPRPRGPPPPPG. At K258 the chain carries N6-acetyllysine. Residues 260 to 269 show a composition bias toward basic and acidic residues; that stretch reads LQLKESRQEE. K263 is covalently cross-linked (Glycyl lysine isopeptide (Lys-Gly) (interchain with G-Cter in SUMO2)). A Phosphoserine modification is found at S272. Position 281 is a phosphothreonine (T281). Phosphoserine is present on residues S290 and S292. T294 carries the post-translational modification Phosphothreonine. S300 is subject to Phosphoserine. Residues 305 to 321 are compositionally biased toward basic residues; it reads EKNRKRRNRKKKKKPQR. Positions 330–342 are enriched in basic and acidic residues; the sequence is SGDREKDSGRSRG. Phosphoserine is present on S343. Glycyl lysine isopeptide (Lys-Gly) (interchain with G-Cter in SUMO2) cross-links involve residues K383 and K395. 2 stretches are compositionally biased toward basic and acidic residues: residues 383 to 397 and 405 to 414; these read KKEK…DKME and KGFEEEHKDS. A required for interaction with PRMT9 region spans residues 384-533; sequence KEKEKEPEKL…QEKEEQKTMK (150 aa). Residues S414, S418, and S419 each carry the phosphoserine modification. K475 participates in a covalent cross-link: Glycyl lysine isopeptide (Lys-Gly) (interchain with G-Cter in SUMO2). Omega-N-methylarginine occurs at positions 491 and 498. Symmetric dimethylarginine is present on R491. A Glycyl lysine isopeptide (Lys-Gly) (interchain with G-Cter in SUMO2) cross-link involves residue K526. Residues 674–740 form a disordered region; it reads AAEFQTKTEE…PGGFSSVPAG (67 aa). The segment covering 695–715 has biased composition (acidic residues); the sequence is EPSDEESSEEEEEEESDEDKP. K753 participates in a covalent cross-link: Glycyl lysine isopeptide (Lys-Gly) (interchain with G-Cter in SUMO2). At T763 the chain carries Phosphothreonine. Glycyl lysine isopeptide (Lys-Gly) (interchain with G-Cter in SUMO2) cross-links involve residues K773, K826, and K840. Over residues 827–852 the composition is skewed to basic and acidic residues; the sequence is YEEHVREQQAQVEKEDFSDMVAEHAA. The interval 827–878 is disordered; the sequence is YEEHVREQQAQVEKEDFSDMVAEHAAKQKQKKRKAQPQDSRGGSKKYKEFKF. Residue S844 is modified to Phosphoserine.

Component of the 17S U2 SnRNP complex, a ribonucleoprotein complex that contains small nuclear RNA (snRNA) U2 and a number of specific proteins. Part of the SF3B subcomplex of the 17S U2 SnRNP complex. SF3B associates with the splicing subcomplex SF3A and a 12S RNA unit to form the U2 small nuclear ribonucleoproteins complex (U2 snRNP). Within the SF3B complex, interacts directly with SF3B4. Found in a complex with PRMT9, SF3B2 and SF3B4. Interacts (Arg-491-methylated form) with SMN1 (via Tudor domain). Interacts with RBM7. Interacts with ERCC6. Component of the minor spliceosome. Within this complex, interacts with SCNM1 and CRIPT. Methylation at Arg-491 by PRMT9 is required for the interaction with SMN1.

The protein resides in the nucleus. The protein localises to the nucleus speckle. Functionally, component of the 17S U2 SnRNP complex of the spliceosome, a large ribonucleoprotein complex that removes introns from transcribed pre-mRNAs. The 17S U2 SnRNP complex (1) directly participates in early spliceosome assembly and (2) mediates recognition of the intron branch site during pre-mRNA splicing by promoting the selection of the pre-mRNA branch-site adenosine, the nucleophile for the first step of splicing. Within the 17S U2 SnRNP complex, SF3B2 is part of the SF3B subcomplex, which is required for 'A' complex assembly formed by the stable binding of U2 snRNP to the branchpoint sequence in pre-mRNA. Sequence independent binding of SF3A and SF3B subcomplexes upstream of the branch site is essential, it may anchor U2 snRNP to the pre-mRNA. May also be involved in the assembly of the 'E' complex. Also acts as a component of the minor spliceosome, which is involved in the splicing of U12-type introns in pre-mRNAs. The chain is Splicing factor 3B subunit 2 from Mus musculus (Mouse).